The following is a 341-amino-acid chain: MIEPVVGYRMLQAIGWPWPGPPADAAWQAMCAVYSQCRPARVIEQHRSGYVVAEAPEVPIKVESLPAWQRRGFPRHERAVVGDWVLLDGRRIVALLPRRTVIKRLAAGEHYRQQLIAANLDTAFIVCGLDGDFNPRRIERYCVLIGSGGVEPVVVLTKVDLCADVGAAVAVLREHSSQALAVVAVDAREAEPVAALYPWLLPGRTVALLGSSGAGKSTLTNTLLGEQRMKVGEVRQRDSRGRHTTTHRALLPLPSGACLIDTPGMRELKFTGEEDLVEEFADIELLATQCRFRDCAHQAEPGCAVRAAIGCGTLDPQRLHHYFKLRGEIVGAADRSTLRRY.

One can recognise a CP-type G domain in the interval Arg112–Leu268. GTP contacts are provided by residues Thr157–Asp160 and Gly210–Thr218. Positions 290, 295, 297, and 303 each coordinate Zn(2+).

This sequence belongs to the TRAFAC class YlqF/YawG GTPase family. RsgA subfamily. In terms of assembly, monomer. Associates with 30S ribosomal subunit, binds 16S rRNA. Zn(2+) serves as cofactor.

The protein resides in the cytoplasm. Functionally, one of several proteins that assist in the late maturation steps of the functional core of the 30S ribosomal subunit. Helps release RbfA from mature subunits. May play a role in the assembly of ribosomal proteins into the subunit. Circularly permuted GTPase that catalyzes slow GTP hydrolysis, GTPase activity is stimulated by the 30S ribosomal subunit. In Xylella fastidiosa (strain 9a5c), this protein is Small ribosomal subunit biogenesis GTPase RsgA.